A 455-amino-acid polypeptide reads, in one-letter code: Bleomycin hydrolase (455 aa).

An N-acetylmethionine modification is found at methionine 1. Residues cysteine 73 and histidine 372 contribute to the active site. Position 391 is an N6-acetyllysine (lysine 391). The active site involves asparagine 396.

Belongs to the peptidase C1 family. Homohexamer. Interacts with NUDT12 (via ANK repeats).

It localises to the cytoplasm. Its subcellular location is the cytoplasmic granule. It carries out the reaction Inactivates bleomycin B2 (a cytotoxic glycometallopeptide) by hydrolysis of a carboxyamide bond of beta-aminoalanine, but also shows general aminopeptidase activity. The specificity varies somewhat with source, but amino acid arylamides of Met, Leu and Ala are preferred.. In terms of biological role, the normal physiological role of BLM hydrolase is unknown, but it catalyzes the inactivation of the antitumor drug BLM (a glycopeptide) by hydrolyzing the carboxamide bond of its B-aminoalaninamide moiety thus protecting normal and malignant cells from BLM toxicity. This Mus musculus (Mouse) protein is Bleomycin hydrolase (Blmh).